The following is a 264-amino-acid chain: ATP synthase subunit a (264 aa).

Helical transmembrane passes span 39 to 59 (LDTLIISVVLGALFILIFYIV), 97 to 117 (VAPLALTIFIWVFLMNFMDLV), 139 to 159 (TADPTLTFAMSITVFVLVIFY), 205 to 225 (LFGNLFAGELIFILIALLPWW), and 239 to 259 (LLVITVQAFIFMMLTVVYISL).

This sequence belongs to the ATPase A chain family. In terms of assembly, F-type ATPases have 2 components, CF(1) - the catalytic core - and CF(0) - the membrane proton channel. CF(1) has five subunits: alpha(3), beta(3), gamma(1), delta(1), epsilon(1). CF(0) has three main subunits: a(1), b(2) and c(9-12). The alpha and beta chains form an alternating ring which encloses part of the gamma chain. CF(1) is attached to CF(0) by a central stalk formed by the gamma and epsilon chains, while a peripheral stalk is formed by the delta and b chains.

The protein localises to the cell inner membrane. Its function is as follows. Key component of the proton channel; it plays a direct role in the translocation of protons across the membrane. This chain is ATP synthase subunit a, found in Coxiella burnetii (strain Dugway 5J108-111).